Here is a 645-residue protein sequence, read N- to C-terminus: Lipase 1 (645 aa).

Residues Met-1–Ala-24 form the signal peptide. Ser-34 (nucleophile) is an active-site residue. Residues Asp-327 and His-330 contribute to the active site. The Autotransporter domain maps to Asn-383–Phe-645.

Belongs to the 'GDSL' lipolytic enzyme family.

It is found in the secreted. The catalysed reaction is a triacylglycerol + H2O = a diacylglycerol + a fatty acid + H(+). This is Lipase 1 (lip-1) from Photorhabdus luminescens (Xenorhabdus luminescens).